The sequence spans 487 residues: Transmembrane protein 161B (487 aa).

N-linked (GlcNAc...) asparagine glycosylation is present at N34. The chain crosses the membrane as a helical span at residues 107–127 (LVDFTVAATIVYLVTEVYYSF). Residue N135 is glycosylated (N-linked (GlcNAc...) asparagine). Helical transmembrane passes span 136–156 (ISLVWCLLVLSFAIKVLFSLT) and 169–189 (SVCVTFGFFFFVKAMAVLIVT). A glycan (N-linked (GlcNAc...) asparagine) is linked at N203. Transmembrane regions (helical) follow at residues 228 to 248 (FKFFLAVFCSLIGAFLTFPGL), 265 to 285 (ITQTLLHINFLAPLFMVLLWV), 305 to 325 (LMTEATFDTLRLWLIILLCVL), 367 to 387 (VFYYLCVIALQYVAPLVMLLH), and 459 to 479 (LSFLTWWIAACLFSTSLFGLF).

This sequence belongs to the TMEM161 family.

It is found in the cell membrane. Functionally, essential for maintaining normal cardiac rhythm in the developing heart and for neonatal survival. Inhibits potassium and calcium currents in the cardiomyocytes, this assists in timely action potential repolarization and thereby maintains normal cardiac rhythm. The polypeptide is Transmembrane protein 161B (Tmem161b) (Mus musculus (Mouse)).